The sequence spans 307 residues: Yop proteins translocation protein Q (307 aa).

This sequence belongs to the FliN/MopA/SpaO family.

Functionally, component of the Yop secretion machinery. In Yersinia pestis, this protein is Yop proteins translocation protein Q (yscQ).